A 190-amino-acid chain; its full sequence is Dirigent protein 15 (190 aa).

The N-terminal stretch at 1-19 is a signal peptide; the sequence is MKSTLIIFFTLCLSMAVMA. 2 N-linked (GlcNAc...) asparagine glycosylation sites follow: N63 and N128.

The protein belongs to the plant dirigent protein family. As to quaternary structure, homodimer.

The protein localises to the secreted. It localises to the extracellular space. It is found in the apoplast. Functionally, dirigent proteins impart stereoselectivity on the phenoxy radical-coupling reaction, yielding optically active lignans from two molecules of coniferyl alcohol in the biosynthesis of lignans, flavonolignans, and alkaloids and thus plays a central role in plant secondary metabolism. The sequence is that of Dirigent protein 15 (DIR15) from Arabidopsis thaliana (Mouse-ear cress).